The primary structure comprises 155 residues: MNASTETSIALPDINDIMRNLPHRYPMLLIDRVVAFSKRERLVGIKNVTINEPYFAGHFPQKPVMPGVLILESMAQACGMLAFKSEQEELGGNHIIYLVAIDKARFKRPVEPGDQLRLEASLKRVMRGLWMFQAQAWVGDALAAEAEIRCTVKEA.

Histidine 58 is a catalytic residue.

Belongs to the thioester dehydratase family. FabZ subfamily.

It localises to the cytoplasm. It carries out the reaction a (3R)-hydroxyacyl-[ACP] = a (2E)-enoyl-[ACP] + H2O. Its function is as follows. Involved in unsaturated fatty acids biosynthesis. Catalyzes the dehydration of short chain beta-hydroxyacyl-ACPs and long chain saturated and unsaturated beta-hydroxyacyl-ACPs. In Alkalilimnicola ehrlichii (strain ATCC BAA-1101 / DSM 17681 / MLHE-1), this protein is 3-hydroxyacyl-[acyl-carrier-protein] dehydratase FabZ.